Reading from the N-terminus, the 389-residue chain is Phospho-N-acetylmuramoyl-pentapeptide-transferase (389 aa).

Transmembrane regions (helical) follow at residues 25-45 (RAVMASLTALVIGLGFGPFVI), 74-94 (MGGVLVLIGIAVSTLLWADWG), 97-117 (FIWIVLLVTLGYGAIGWVDDY), 134-154 (FFWQTVIGLFAAAYLAFSVSE), 190-210 (ISYPLGVFGFIILTYLVIVGS), 222-242 (GLVIMPVVLVGSALGVFAYVM), 259-279 (AGELLIFCSAMAGAGLAFLWF), 286-306 (VFMGDVGALALGGALGTIAVI), 311-331 (IVLFIMGGIFVAETVSVMLQV), and 366-386 (QVVVRFWVITMMLVLIGLSTL).

This sequence belongs to the glycosyltransferase 4 family. MraY subfamily. It depends on Mg(2+) as a cofactor.

It is found in the cell inner membrane. It catalyses the reaction UDP-N-acetyl-alpha-D-muramoyl-L-alanyl-gamma-D-glutamyl-meso-2,6-diaminopimeloyl-D-alanyl-D-alanine + di-trans,octa-cis-undecaprenyl phosphate = di-trans,octa-cis-undecaprenyl diphospho-N-acetyl-alpha-D-muramoyl-L-alanyl-D-glutamyl-meso-2,6-diaminopimeloyl-D-alanyl-D-alanine + UMP. It participates in cell wall biogenesis; peptidoglycan biosynthesis. Functionally, catalyzes the initial step of the lipid cycle reactions in the biosynthesis of the cell wall peptidoglycan: transfers peptidoglycan precursor phospho-MurNAc-pentapeptide from UDP-MurNAc-pentapeptide onto the lipid carrier undecaprenyl phosphate, yielding undecaprenyl-pyrophosphoryl-MurNAc-pentapeptide, known as lipid I. This chain is Phospho-N-acetylmuramoyl-pentapeptide-transferase, found in Ralstonia pickettii (strain 12J).